The chain runs to 33 residues: Brevinin-2Rk (33 aa).

A disulfide bond links cysteine 27 and cysteine 33.

As to expression, expressed by the skin glands.

Its subcellular location is the secreted. Functionally, antimicrobial peptide. In Pelophylax ridibundus (Marsh frog), this protein is Brevinin-2Rk.